The primary structure comprises 245 residues: Tyrosine recombinase XerD-like (245 aa).

The 72-residue stretch at 1-72 folds into the Core-binding (CB) domain; that stretch reads MITFISKFLA…AVNQFLFFLY (72 aa). The 156-residue stretch at 90-245 folds into the Tyr recombinase domain; that stretch reads PLLTPAYQEV…PVTLEKYFKN (156 aa). Active-site residues include lysine 151 and arginine 210. Tyrosine 242 (O-(3'-phospho-DNA)-tyrosine intermediate) is an active-site residue.

This sequence belongs to the 'phage' integrase family. XerD-like subfamily.

It localises to the cytoplasm. Its function is as follows. Putative tyrosine recombinase. Not involved in the cutting and rejoining of the recombining DNA molecules on dif(SL) site. This Streptococcus mutans serotype c (strain ATCC 700610 / UA159) protein is Tyrosine recombinase XerD-like.